The chain runs to 254 residues: Ciliary microtubule associated protein 1A (254 aa).

STPGR repeat units follow at residues 180-205 and 216-241; these read PGPAAYRQTDVRVTKFKAPQYTMAAR and PGPGAHSPEKVTLTKPCAPVVTFGIK. A disordered region spans residues 207–226; it reads EPPGDKTLKPGPGAHSPEKV.

It belongs to the CIMAP family. Microtubule inner protein component of sperm flagellar doublet microtubules. Testis-specific.

It localises to the cytoplasm. The protein localises to the cytoskeleton. It is found in the flagellum axoneme. Functionally, outer dense fibers are filamentous structures located on the outside of the axoneme in the midpiece and principal piece of the mammalian sperm tail. May help to maintain the passive elastic structures and elastic recoil of the sperm tail. The protein is Ciliary microtubule associated protein 1A of Homo sapiens (Human).